An 804-amino-acid polypeptide reads, in one-letter code: Endoplasmin (804 aa).

An N-terminal signal peptide occupies residues Met1–Ala21. The SRT pseudosubstrate motif signature appears at Ser42–Thr44. N-linked (GlcNAc...) asparagine glycosylation occurs at Asn62. Ser64 is modified (phosphoserine). Asn107 carries an N-linked (GlcNAc...) asparagine glycan. Asn107, Asp149, and Asn162 together coordinate ATP. Lys168 bears the N6-(2-hydroxyisobutyryl)lysine mark. Phosphoserine is present on Ser172. Phe199 lines the ATP pocket. A glycan (N-linked (GlcNAc...) asparagine) is linked at Asn217. The interval Thr288 to Thr323 is disordered. A compositionally biased stretch (acidic residues) spans Val289–Glu317. Phosphoserine is present on Ser403. N6-succinyllysine is present on Lys404. Asn445 is a glycosylation site (N-linked (GlcNAc...) asparagine). The residue at position 447 (Ser447) is a Phosphoserine. Lys479 bears the N6-acetyllysine mark. Asn481 and Asn502 each carry an N-linked (GlcNAc...) asparagine glycan. Lys633 is modified (N6-succinyllysine). Residues Ile749–Leu804 form a disordered region. A compositionally biased stretch (acidic residues) spans Ala753–Thr794. The segment covering Glu795–Leu804 has biased composition (basic and acidic residues). The Prevents secretion from ER signature appears at Lys801–Leu804.

The protein belongs to the heat shock protein 90 family. Homodimer; disulfide-linked. Component of an EIF2 complex at least composed of CELF1/CUGBP1, CALR, CALR3, EIF2S1, EIF2S2, HSP90B1 and HSPA5. Part of a large chaperone multiprotein complex comprising DNAJB11, HSP90B1, HSPA5, HYOU, PDIA2, PDIA4, PDIA6, PPIB, SDF2L1, UGGT1 and very small amounts of ERP29, but not, or at very low levels, CALR nor CANX. Interacts with AIMP1; regulates its retention in the endoplasmic reticulum. Hyperglycosylated form interacts with OS9; promoting its degradation by the endoplasmic reticulum associated degradation (ERAD). Interacts with CNPY3. This interaction is disrupted in the presence of ATP. Interacts with TLR4 and TLR9, but not with TLR3. Interacts with MZB1 in a calcium-dependent manner. Interacts with METTL23. Interacts with IL1B; the interaction facilitates cargo translocation into the ERGIC. Interacts with EIF2AK3. In terms of processing, phosphorylated by CK2. Post-translationally, N-glycosylated cotranslationally at Asn-217 by STT3A-containing OST-A complex: this glycosylation is constitutive. In response to various stress, 5 additional facultative sites (Asn-62, Asn-107, Asn-445, Asn-481 and Asn-502) can be glycosylated post-translationally by STT3B-containing OST-B complex, leading to a hyperglycosylated form that is degraded by the ER-associated degradation (ERAD) pathway. In normal conditions, the OST-A complex together with CCDC134 prevent glycosylation at facultative sites during protein folding, thereby preventing hyperglycosylation. Mechanistically, nascent HSP90B1 is tethered during translation to a specialized CCDC134-containing translocon that forms a microenvironment for its folding, in which STT3A associates with the SRT pseudosubstrate motif, and prevents access to facultative glycosylation sites until folding is completed, rendering its facultative sites inaccessible to the OST-B complex.

Its subcellular location is the endoplasmic reticulum lumen. It is found in the sarcoplasmic reticulum lumen. It localises to the melanosome. The catalysed reaction is ATP + H2O = ADP + phosphate + H(+). In terms of biological role, ATP-dependent chaperone involved in the processing of proteins in the endoplasmic reticulum, regulating their transport. Together with MESD, acts as a modulator of the Wnt pathway by promoting the folding of LRP6, a coreceptor of the canonical Wnt pathway. When associated with CNPY3, required for proper folding of Toll-like receptors. Promotes folding and trafficking of TLR4 to the cell surface. May participate in the unfolding of cytosolic leaderless cargos (lacking the secretion signal sequence) such as the interleukin 1/IL-1 to facilitate their translocation into the ERGIC (endoplasmic reticulum-Golgi intermediate compartment) and secretion; the translocation process is mediated by the cargo receptor TMED10. This Rattus norvegicus (Rat) protein is Endoplasmin.